We begin with the raw amino-acid sequence, 64 residues long: Large ribosomal subunit protein bL35 (64 aa).

Over residues Met-1–Lys-28 the composition is skewed to basic residues. Residues Met-1–Ala-51 form a disordered region.

This sequence belongs to the bacterial ribosomal protein bL35 family.

In Saccharophagus degradans (strain 2-40 / ATCC 43961 / DSM 17024), this protein is Large ribosomal subunit protein bL35.